The following is a 194-amino-acid chain: Holliday junction branch migration complex subunit RuvA (194 aa).

Residues 1–64 (MIGRLRGVLT…DDSAALYGFL (64 aa)) are domain I. Residues 65 to 140 (SESERRLFRH…RAADFNNGIS (76 aa)) form a domain II region. Residues 140–144 (STSGK) are flexible linker. The tract at residues 145-194 (LNLDTVSEAALALQQLGYKPAEAARMARDAGTESDDVASVIKKALQAALR) is domain III.

It belongs to the RuvA family. In terms of assembly, homotetramer. Forms an RuvA(8)-RuvB(12)-Holliday junction (HJ) complex. HJ DNA is sandwiched between 2 RuvA tetramers; dsDNA enters through RuvA and exits via RuvB. An RuvB hexamer assembles on each DNA strand where it exits the tetramer. Each RuvB hexamer is contacted by two RuvA subunits (via domain III) on 2 adjacent RuvB subunits; this complex drives branch migration. In the full resolvosome a probable DNA-RuvA(4)-RuvB(12)-RuvC(2) complex forms which resolves the HJ.

It localises to the cytoplasm. The RuvA-RuvB-RuvC complex processes Holliday junction (HJ) DNA during genetic recombination and DNA repair, while the RuvA-RuvB complex plays an important role in the rescue of blocked DNA replication forks via replication fork reversal (RFR). RuvA specifically binds to HJ cruciform DNA, conferring on it an open structure. The RuvB hexamer acts as an ATP-dependent pump, pulling dsDNA into and through the RuvAB complex. HJ branch migration allows RuvC to scan DNA until it finds its consensus sequence, where it cleaves and resolves the cruciform DNA. The polypeptide is Holliday junction branch migration complex subunit RuvA (Xylella fastidiosa (strain 9a5c)).